A 258-amino-acid chain; its full sequence is Ribosomal RNA small subunit methyltransferase J (258 aa).

S-adenosyl-L-methionine is bound by residues 107–108, 123–124, and Asp-177; these read RD and ER.

Belongs to the methyltransferase superfamily. RsmJ family.

It is found in the cytoplasm. The catalysed reaction is guanosine(1516) in 16S rRNA + S-adenosyl-L-methionine = N(2)-methylguanosine(1516) in 16S rRNA + S-adenosyl-L-homocysteine + H(+). Specifically methylates the guanosine in position 1516 of 16S rRNA. This is Ribosomal RNA small subunit methyltransferase J from Stutzerimonas stutzeri (strain A1501) (Pseudomonas stutzeri).